We begin with the raw amino-acid sequence, 785 residues long: Rho GTPase-activating protein 10 (785 aa).

Positions 7 to 262 constitute a BAR domain; that stretch reads EFSDCYLDSP…IRQNPKDHKR (256 aa). The PH domain occupies 265–372; it reads QFTAEGYLYV…WLEVLGGKEA (108 aa). The Rho-GAP domain maps to 389-574; it reads AQLDKMGFTI…ILIENHEKIF (186 aa). The tract at residues 576–708 is disordered; that stretch reads TPPDATLPEP…PAVTPPSPKL (133 aa). Residues 584-595 are compositionally biased toward pro residues; that stretch reads EPGPLSAPPNAP. A compositionally biased stretch (basic residues) spans 598–608; the sequence is QSKRQGQRTKR. Residues 622 to 632 are compositionally biased toward basic and acidic residues; the sequence is GDRPSLPKEDT. Positions 633 to 650 are enriched in low complexity; the sequence is PPSSLDSLSSPSPTTATA. A compositionally biased stretch (polar residues) spans 675 to 697; sequence APSQARSSAVQWLNPQSPTTPSC. Residues 727-785 enclose the SH3 domain; sequence IISRKARAVYPCEAEHSSELSFEIGAIFEDVQTSREPGWLEGTLNGKRGLIPQNYVKLL.

Interacts with PKN3. Interacts with caspase-activated PAK2 proteolytic fragment PAK-2p34; the interaction does not affect ARHGAP10 GTPase activation activity towards RHOA and CDC42. Interacts via its SH3 domain with PTK2/FAK1. Interacts with PTK2B/PYK2; the interaction negatively regulates ARHGAP10 GTPase-activating activity. Interacts with MICAL1 and WDR44; complex formation might transit from GRAF2/ARHGAP10-MICAL1 to GRAF2/ARHGAP10-WDR44 complexes.

The protein localises to the cytoplasm. It localises to the perinuclear region. It is found in the cell membrane. The protein resides in the endosome membrane. Functionally, GTPase-activating protein that catalyzes the conversion of active GTP-bound Rho GTPases to their inactive GDP-bound form, thus suppressing various Rho GTPase-mediated cellular processes. Also converts Cdc42 to an inactive GDP-bound state. Essential for PTKB2 regulation of cytoskeletal organization via Rho family GTPases. Inhibits PAK2 proteolytic fragment PAK-2p34 kinase activity and changes its localization from the nucleus to the perinuclear region. Stabilizes PAK-2p34 thereby increasing stimulation of cell death. Associates with MICAL1 on the endosomal membrane to promote Rab8-Rab10-dependent tubule extension. After dissociation with MICAL1, recruits WDR44 which connects the endoplasmic reticulum (ER) with the endosomal tubule, thereby participating in the export of a subset of neosynthesized proteins. This chain is Rho GTPase-activating protein 10 (ARHGAP10), found in Bos taurus (Bovine).